Here is a 742-residue protein sequence, read N- to C-terminus: MQISLQIHLSSFTFLLLIFLLPVLSESQVASSESQTLLEIQKQLQYPQVLQSWTDTTNFCHIRPSPSLRIICLHGHVTELTVTGNRTSKLSGSFHKLFTLLTQLSSLKTLSLTSLGISGSLSPKIITKLSPSLESLNLSSNFISGKIPEEIVSLKNLKSLVLRDNMFWGFVSDDLRGLSNLQELDLGGNKLGPEVPSLPSKLTTVSLKNNSFRSKIPEQIKKLNNLQSLDLSSNEFTGSIPEFLFSIPSLQILSLDQNLLSGSLPNSSCTSSKIITLDVSHNLLTGKLPSCYSSKSFSNQTVLFSFNCLSLIGTPNAKYQRPLSFCQNQASKAIAVEPIPKAKDKDSARIKLGLVILIIIGVIILAAILVLLVLIALKRRRSRSEDDPFEVNNSNNERHASDKVSVCSTTTASSKSLPDSRRVPQTMRSAVIGLPPYRVFSLEELEEATNDFDAASLFCEQLYRGCLREGIPVTVRVIKLKQKSLPQSLAQQMEVLSKLRHMHLVSVLGHSIASNQDHNQHAGHTIFIVQEYISSGSLRDFLTNCRKKEVLKWPQRMAIAIGVARGIQFLHMGVAPGIFGNNLKIENIMLDETLTVKISGYTIPLPSKVGEERPQAKKPRSNEDREKEDVYQFGVILLQIITGKVVAAGSSEMGSLKLQLENGLRDEPSVLSSLADPSVKGSYAYESLRTTVEFAINCLCEDQSKRPSIEDVVWNLQYTIQVQQGWRPSSGNHESSMKAIYE.

The signal sequence occupies residues 1–25; it reads MQISLQIHLSSFTFLLLIFLLPVLS. Topologically, residues 26–354 are extracellular; that stretch reads ESQVASSESQ…KDSARIKLGL (329 aa). 9 LRR repeats span residues 74–96, 104–128, 130–154, 156–177, 178–204, 206–223, 224–247, 249–271, and 273–294; these read HGHV…SFHK, LSSL…IITK, SPSL…IVSL, NLKS…DLRG, LSNL…KLTT, SLKN…IKKL, NNLQ…LFSI, SLQI…SCTS, and KIIT…CYSS. A glycan (N-linked (GlcNAc...) asparagine) is linked at asparagine 85. N-linked (GlcNAc...) asparagine glycosylation is present at asparagine 137. Asparagine 209 is a glycosylation site (N-linked (GlcNAc...) asparagine). Asparagine 266 carries an N-linked (GlcNAc...) asparagine glycan. N-linked (GlcNAc...) asparagine glycosylation occurs at asparagine 299. A helical membrane pass occupies residues 355-375; it reads VILIIIGVIILAAILVLLVLI. Residues 376–742 lie on the Cytoplasmic side of the membrane; the sequence is ALKRRRSRSE…HESSMKAIYE (367 aa). The tract at residues 386–424 is disordered; sequence DDPFEVNNSNNERHASDKVSVCSTTTASSKSLPDSRRVP. Positions 406–417 are enriched in polar residues; it reads VCSTTTASSKSL. In terms of domain architecture, Protein kinase spans 426–720; that stretch reads TMRSAVIGLP…DVVWNLQYTI (295 aa).

This sequence belongs to the protein kinase superfamily. Ser/Thr protein kinase family.

The protein localises to the membrane. It carries out the reaction L-seryl-[protein] + ATP = O-phospho-L-seryl-[protein] + ADP + H(+). It catalyses the reaction L-threonyl-[protein] + ATP = O-phospho-L-threonyl-[protein] + ADP + H(+). The chain is Probable LRR receptor-like serine/threonine-protein kinase At2g02780 from Arabidopsis thaliana (Mouse-ear cress).